A 284-amino-acid polypeptide reads, in one-letter code: Rhomboid-type serine protease 2 (284 aa).

Transmembrane regions (helical) follow at residues 17–37 (PPALTTGLIVFTFMLCVIKSV), 66–86 (FHVNFFHWICNIFTLATPLAV), 98–118 (VTLNLLTVIAALQYCIVGLIF), 124–141 (VIGLSGIAFSLMSYMAYH), 160–180 (IKLYTLYVPFVVAIVFMILFP), and 182–202 (SSLPGHLFGITTGYLLSYGYI). The Nucleophile role is filled by serine 128. Residue histidine 187 is part of the active site.

Belongs to the peptidase S54 family.

It localises to the golgi apparatus membrane. It is found in the golgi apparatus. Its subcellular location is the cis-Golgi network membrane. The catalysed reaction is Cleaves type-1 transmembrane domains using a catalytic dyad composed of serine and histidine that are contributed by different transmembrane domains.. Functionally, probable rhomboid-type serine protease that catalyzes intramembrane proteolysis. The sequence is that of Rhomboid-type serine protease 2 (RBD2) from Candida albicans (strain SC5314 / ATCC MYA-2876) (Yeast).